The sequence spans 336 residues: Small ribosomal subunit protein RACK1y (336 aa).

WD repeat units follow at residues 15–55 (GHND…TAVA), 74–113 (GHSH…TTRR), 116–155 (GHTK…KYTI), 164–205 (GHTG…LRTK), 208–247 (GHNG…MLYK), 249–287 (DAGA…VMQD), and 297–336 (SQML…GYAI).

This sequence belongs to the WD repeat G protein beta family. Ribosomal protein RACK1 subfamily. In terms of assembly, homodimer and heterodimer with RACK1A.

Functionally, component of the RACK1 regulatory proteins that play a role in multiple signal transduction pathways. In Oryza sativa subsp. japonica (Rice), this protein is Small ribosomal subunit protein RACK1y (RACK1B).